The chain runs to 530 residues: Methionine--tRNA ligase (530 aa).

Residues 18 to 28 (YYVNDVPHIGS) carry the 'HIGH' region motif. The Zn(2+) site is built by Cys133, Cys136, Cys151, and His154. The short motif at 307–311 (KMGKS) is the 'KMSKS' region element. Lys310 contributes to the ATP binding site.

Belongs to the class-I aminoacyl-tRNA synthetase family. MetG type 2A subfamily. Monomer. Requires Zn(2+) as cofactor.

It is found in the cytoplasm. The catalysed reaction is tRNA(Met) + L-methionine + ATP = L-methionyl-tRNA(Met) + AMP + diphosphate. Its function is as follows. Is required not only for elongation of protein synthesis but also for the initiation of all mRNA translation through initiator tRNA(fMet) aminoacylation. In Nostoc sp. (strain PCC 7120 / SAG 25.82 / UTEX 2576), this protein is Methionine--tRNA ligase.